The following is a 434-amino-acid chain: Beta-enolase (434 aa).

At Ala-2 the chain carries N-acetylalanine. Thr-72 carries the post-translational modification Phosphothreonine. Phosphoserine occurs at positions 83 and 157. Substrate-binding residues include His-158 and Glu-167. Ser-176 is modified (phosphoserine). Thr-205 carries the phosphothreonine modification. Glu-210 acts as the Proton donor in catalysis. Residue Thr-229 is modified to Phosphothreonine. The residue at position 236 (Tyr-236) is a Phosphotyrosine. Asp-245 lines the Mg(2+) pocket. Ser-263 bears the Phosphoserine mark. Residues Glu-293 and Asp-318 each contribute to the substrate site. Residues Glu-293 and Asp-318 each contribute to the Mg(2+) site. Lys-343 functions as the Proton acceptor in the catalytic mechanism. Residues 370 to 373 (SHRS) and Lys-394 each bind substrate.

Belongs to the enolase family. As to quaternary structure, mammalian enolase is composed of 3 isozyme subunits, alpha, beta and gamma, which can form homodimers or heterodimers which are cell-type and development-specific. Interacts with PNKD. The cofactor is Mg(2+). As to expression, the alpha/alpha homodimer is expressed in embryo and in most adult tissues. The alpha/beta heterodimer and the beta/beta homodimer are found in striated muscle, and the alpha/gamma heterodimer and the gamma/gamma homodimer in neurons.

It localises to the cytoplasm. It catalyses the reaction (2R)-2-phosphoglycerate = phosphoenolpyruvate + H2O. It functions in the pathway carbohydrate degradation; glycolysis; pyruvate from D-glyceraldehyde 3-phosphate: step 4/5. Functionally, glycolytic enzyme that catalyzes the conversion of 2-phosphoglycerate to phosphoenolpyruvate. Appears to have a function in striated muscle development and regeneration. This chain is Beta-enolase (Eno3), found in Rattus norvegicus (Rat).